The primary structure comprises 169 residues: MAILKICTYPDPVLRKETVAITVFDEKLVKLTEDMAETMYDAPGIGLAAPQIGESLKLVVVSTARREDSKQEYMVMANPEIVEKEESQVDEEGCLSVPELLAMVKRYRKIKVNYQDINGEPCSMTVEDRFAVVLQHEIDHLNGILFLDHLSSLKRNLYKKKVKKWFLPR.

Cys-94 and His-136 together coordinate Fe cation. The active site involves Glu-137. Residue His-140 coordinates Fe cation.

It belongs to the polypeptide deformylase family. Fe(2+) is required as a cofactor.

It carries out the reaction N-terminal N-formyl-L-methionyl-[peptide] + H2O = N-terminal L-methionyl-[peptide] + formate. Its function is as follows. Removes the formyl group from the N-terminal Met of newly synthesized proteins. Requires at least a dipeptide for an efficient rate of reaction. N-terminal L-methionine is a prerequisite for activity but the enzyme has broad specificity at other positions. This is Peptide deformylase from Desulfotalea psychrophila (strain LSv54 / DSM 12343).